A 258-amino-acid chain; its full sequence is Aquaglyceroporin (258 aa).

Over 1 to 16 the chain is Cytoplasmic; that stretch reads MKVTFGNEYIKNFLGE. Residues 17-37 traverse the membrane as a helical segment; it reads FIGTFVLMFLGEGTTANHFAV. The Extracellular segment spans residues 38–45; the sequence is PIKNDWLR. A helical transmembrane segment spans residues 46-66; sequence LCIGWGLGVFFGILISAKLSG. Alanine 67 and asparagine 70 together coordinate glycerol. The Cytoplasmic portion of the chain corresponds to 67–87; that stretch reads AHLNLAVTVGLSTIKKFNYKQ. The helical transmembrane segment at 88 to 108 threads the bilayer; that stretch reads IPLYFAGQLLGALSATASVYG. Over 109–133 the chain is Extracellular; the sequence is LYYGFVSDQTIPKFSWETGKHANVH. Residues 134-154 form a helical membrane-spanning segment; sequence IASAFMHEFILTGILLLIILS. The Cytoplasmic portion of the chain corresponds to 155 to 171; the sequence is VTDENICGKFHVLKVSS. Residues 172–192 traverse the membrane as a helical segment; sequence IVGLAIICIGISFGGNTGFAL. Glycerol-binding residues include glycine 189, phenylalanine 190, asparagine 193, and arginine 196. The Extracellular portion of the chain corresponds to 193 to 217; the sequence is NPSRDLGARILSAIAYGFEAFTRDK. The chain crosses the membrane as a helical span at residues 218-238; the sequence is CYFWIPLIAPIIGSIIFCQIY. Residues 239-258 lie on the Cytoplasmic side of the membrane; sequence DKIVAPLVVISEHDKGALEI.

It belongs to the MIP/aquaporin (TC 1.A.8) family.

Its subcellular location is the cell membrane. It carries out the reaction H2O(in) = H2O(out). It catalyses the reaction glycerol(in) = glycerol(out). The catalysed reaction is urea(in) = urea(out). Functionally, mediates water and glycerol transport across the cell membrane. Permeable to urea. Required for efficient progression of parasites through the liver stages. The chain is Aquaglyceroporin from Plasmodium berghei (strain Anka).